We begin with the raw amino-acid sequence, 177 residues long: uncharacterized protein (177 aa).

Belongs to the flavoredoxin family. It depends on FMN as a cofactor.

This is an uncharacterized protein from Archaeoglobus fulgidus (strain ATCC 49558 / DSM 4304 / JCM 9628 / NBRC 100126 / VC-16).